The primary structure comprises 143 residues: Transcriptional regulator MraZ (143 aa).

SpoVT-AbrB domains lie at 5–47 (EYSH…PMPV) and 76–119 (AMEA…SDEN).

Belongs to the MraZ family. As to quaternary structure, forms oligomers.

It localises to the cytoplasm. The protein localises to the nucleoid. In Leuconostoc citreum (strain KM20), this protein is Transcriptional regulator MraZ.